The following is a 462-amino-acid chain: A-type ATP synthase subunit B (462 aa).

It belongs to the ATPase alpha/beta chains family. In terms of assembly, has multiple subunits with at least A(3), B(3), C, D, E, F, H, I and proteolipid K(x).

It localises to the cell membrane. In terms of biological role, component of the A-type ATP synthase that produces ATP from ADP in the presence of a proton gradient across the membrane. The B chain is a regulatory subunit. The protein is A-type ATP synthase subunit B of Methanococcus maripaludis (strain C6 / ATCC BAA-1332).